The primary structure comprises 1401 residues: Enhancer of mRNA-decapping protein 4 (1401 aa).

Position 2 is an N-acetylalanine (alanine 2). Phosphoserine is present on residues serine 3 and serine 6. The tract at residues 23–42 (DRPAGGPSAESPRPSSAYNG) is disordered. WD repeat units lie at residues 121-164 (QPVA…VISV), 167-206 (SERT…VWRL), 217-269 (ILVH…VWDL), 287-326 (KQGF…FWQI), 335-385 (RCLH…MWCT), 389-426 (TCLQ…LSDV), and 432-475 (YVME…LRHT). Lysine 125 carries the post-translational modification N6-acetyllysine. Residues 545–565 (TFGESRPELGSEGLGSAAHGS) are disordered. Phosphoserine is present on residues serine 560, serine 565, serine 583, and serine 585. 2 disordered regions span residues 603-628 (ASLQ…SSSS) and 662-702 (DGSL…QVPT). Low complexity predominate over residues 609–628 (TASPSSSSSGSSSSSSSSSS). Residues 663–675 (GSLTMSSSGSLQA) are compositionally biased toward polar residues. Serine 676 bears the Phosphoserine mark. Low complexity predominate over residues 677 to 689 (PRGLLPGLLPAPA). Threonine 693 is subject to Phosphothreonine. Phosphoserine occurs at positions 708, 723, and 725. 2 disordered regions span residues 717-741 (LGLP…TALS) and 778-808 (LLSP…HNTP). The span at 722 to 741 (ASPSRTRSPDVISSASTALS) shows a compositional bias: polar residues. Position 727 is a phosphothreonine (threonine 727). Serine 729 and serine 741 each carry phosphoserine. Threonine 821 bears the Phosphothreonine mark. 7 positions are modified to phosphoserine: serine 844, serine 871, serine 875, serine 879, serine 887, serine 890, and serine 892. The interval 868 to 946 (QRDSQDASAE…RLTEHQVAEP (79 aa)) is disordered. Residues 913–934 (GSPRTSPKLKRKSKKDDGDAAM) form a sufficient for nuclear localization region. A coiled-coil region spans residues 954–1025 (IWQQQRELAE…GGQLQEQLTQ (72 aa)). Residues serine 967 and serine 1380 each carry the phosphoserine modification.

It belongs to the WD repeat EDC4 family. In terms of assembly, part of a decapping complex consisting of DCP1A, DCP2, EDC3, EDC4 and probably DDX6. Part of a complex consisting of DCP1A, EDC3, EDC4 and DDX6. Part of a complex consisting of DCP1B, EDC3, EDC4 and DDX6. Interacts with DCP2. Interacts with RC3H1. Interacts with NBDY. Interacts with TEX19. Interacts with LSM14A. Interacts with DDX6. (Microbial infection) Interacts with rotavirus A non-structural protein 2; this interaction probably plays a role in the sequestration of EDC4 in viral factories. Interacts with rotavirus A non-structural protein 5; this interaction probably plays a role in its sequestration in viral factories.

The protein localises to the cytoplasm. It localises to the P-body. Its subcellular location is the nucleus. Its function is as follows. In the process of mRNA degradation, seems to play a role in mRNA decapping. Component of a complex containing DCP2 and DCP1A which functions in decapping of ARE-containing mRNAs. Promotes complex formation between DCP1A and DCP2. Enhances the catalytic activity of DCP2 (in vitro). In Homo sapiens (Human), this protein is Enhancer of mRNA-decapping protein 4 (EDC4).